A 143-amino-acid polypeptide reads, in one-letter code: Transmembrane protein 80 (143 aa).

The next 4 membrane-spanning stretches (helical) occupy residues 22–42 (LLCL…LLLV), 47–67 (VFTY…LMGI), 88–108 (LAAS…FLLW), and 122–142 (PLLA…AAFV).

It is found in the membrane. It localises to the cell projection. The protein localises to the cilium. The chain is Transmembrane protein 80 (TMEM80) from Bos taurus (Bovine).